Reading from the N-terminus, the 193-residue chain is Large ribosomal subunit protein eL18 (193 aa).

Residues 158–193 (HFGAAGVPGSHAKPFTSNRGKERQRSSARRRAFRHK) are disordered. The span at 183-193 (SSARRRAFRHK) shows a compositional bias: basic residues.

It belongs to the eukaryotic ribosomal protein eL18 family.

It is found in the cytoplasm. This is Large ribosomal subunit protein eL18 (RPL18) from Trypanosoma cruzi (strain CL Brener).